The chain runs to 459 residues: Vasoactive intestinal polypeptide receptor 1 (459 aa).

The N-terminal stretch at M1–A30 is a signal peptide. Topologically, residues A31–T142 are extracellular. Disulfide bonds link C37–C209, C50–C72, C63–C105, C86–C122, and C216–C286. Residues N58, N69, and N100 are each glycosylated (N-linked (GlcNAc...) asparagine). A helical membrane pass occupies residues V143–L167. At F168 to R175 the chain is on the cytoplasmic side. The helical transmembrane segment at N176–D197 threads the bilayer. Topologically, residues M198–K217 are extracellular. The helical transmembrane segment at A218–Y242 threads the bilayer. Over T243–Y255 the chain is Cytoplasmic. The helical transmembrane segment at F256 to V277 threads the bilayer. Over R278–S293 the chain is Extracellular. N-linked (GlcNAc...) asparagine glycosylation occurs at N292. A helical membrane pass occupies residues S294 to I318. Topologically, residues R319–R340 are cytoplasmic. The chain crosses the membrane as a helical span at residues L341–F361. Residues F362–Q369 are Extracellular-facing. The helical transmembrane segment at V370–L393 threads the bilayer. At N394–V459 the chain is on the cytoplasmic side.

Belongs to the G-protein coupled receptor 2 family. In terms of assembly, interacts with ADCYAP1/PACAP; activated by both PACAP27 and PACAP38 neuropeptides. Interacts with VIP; the interaction results in VIPR1 activation. In terms of tissue distribution, in liver, lung, intestines, thymus and brain (mostly in the cerebral cortex and hippocampus).

It localises to the cell membrane. Functionally, g protein-coupled receptor activated by the neuropeptides vasoactive intestinal peptide (VIP) and pituitary adenylate cyclase-activating polypeptide (ADCYAP1/PACAP). Binds VIP and both PACAP27 and PACAP38 bioactive peptides with the following order of ligand affinity VIP = PACAP27 &gt; PACAP38. Ligand binding causes a conformation change that triggers signaling via guanine nucleotide-binding proteins (G proteins) and modulates the activity of downstream effectors. Activates cAMP-dependent pathway. This chain is Vasoactive intestinal polypeptide receptor 1, found in Rattus norvegicus (Rat).